Reading from the N-terminus, the 340-residue chain is Organic solute transporter subunit alpha (340 aa).

The Extracellular segment spans residues 1-48 (MEPGRTQIKLDPRYTADLLEVLKTNYGIPSACFSQPPTAAQLLRALGP). Residues 49–69 (VELALTSILTLLALGSIAIFL) traverse the membrane as a helical segment. Residues 70–87 (EDAVYLYKNTLCPIKRRT) are Cytoplasmic-facing. Residues 88–108 (LLWKSSAPTVVSVLCCFGLWI) traverse the membrane as a helical segment. Residues 109–118 (PRSLVLVEMT) lie on the Extracellular side of the membrane. A helical membrane pass occupies residues 119-139 (ITSFYAVCFYLLMLVMVEGFG). Residues 140–181 (GKEAVLRTLRDTPMMVHTGPCCCCCPCCPRLLLTRKKLQLLM) lie on the Cytoplasmic side of the membrane. Residues 182 to 202 (LGPFQYAFLKITLTLVGLFLV) traverse the membrane as a helical segment. Topologically, residues 203 to 218 (PDGIYDPADISEGSTA) are extracellular. A helical membrane pass occupies residues 219-239 (LWINTFLGVSTLLALWTLGII). The Cytoplasmic portion of the chain corresponds to 240-255 (SRQARLHLGEQNMGAK). The helical transmembrane segment at 256–276 (FALFQVLLILTALQPSIFSVL) threads the bilayer. The Extracellular portion of the chain corresponds to 277 to 294 (ANGGQIACSPPYSSKTRS). A helical membrane pass occupies residues 295–317 (QVMNCHLLILETFLMTVLTRMYY). Topologically, residues 318 to 340 (RRKDHKVGYETFSSPDLDLNLKA) are cytoplasmic. Ser330 carries the phosphoserine modification.

It belongs to the OST-alpha family. Interacts with SLC51B. The Ost-alpha/Ost-beta complex is a heterodimer composed of alpha (SLC51A) and beta (SLC51B) subunit. As to expression, widely expressed with a high expression in ileum. Expressed in testis, colon, liver, small intestine, kidney, ovary and adrenal gland; and at low levels in heart, lung, brain, pituitary, thyroid gland, uterus, prostate, mammary gland and fat.

Its subcellular location is the cell membrane. It localises to the endoplasmic reticulum membrane. The enzyme catalyses taurocholate(out) = taurocholate(in). It catalyses the reaction estrone 3-sulfate(out) = estrone 3-sulfate(in). It carries out the reaction dehydroepiandrosterone 3-sulfate(out) = dehydroepiandrosterone 3-sulfate(in). The catalysed reaction is tauroursodeoxycholate(out) = tauroursodeoxycholate(in). The enzyme catalyses glycoursodeoxycholate(out) = glycoursodeoxycholate(in). It catalyses the reaction glycocholate(out) = glycocholate(in). It carries out the reaction taurochenodeoxycholate(out) = taurochenodeoxycholate(in). The catalysed reaction is glycochenodeoxycholate(out) = glycochenodeoxycholate(in). The enzyme catalyses taurodeoxycholate(out) = taurodeoxycholate(in). It catalyses the reaction glycodeoxycholate(out) = glycodeoxycholate(in). It carries out the reaction prostaglandin E2(out) = prostaglandin E2(in). In terms of biological role, essential component of the Ost-alpha/Ost-beta complex, a heterodimer that acts as the intestinal basolateral transporter responsible for bile acid export from enterocytes into portal blood. Efficiently transports the major species of bile acids (taurocholate). Taurine conjugates are transported more efficiently across the basolateral membrane than glycine-conjugated bile acids. Can also transport steroids such as estrone 3-sulfate and dehydroepiandrosterone 3-sulfate, therefore playing a role in the enterohepatic circulation of sterols. Able to transport eicosanoids such as prostaglandin E2. The protein is Organic solute transporter subunit alpha (SLC51A) of Homo sapiens (Human).